The following is a 295-amino-acid chain: Protoheme IX farnesyltransferase (295 aa).

9 helical membrane passes run 30 to 50 (LVVLTGVTGIIIAPGNIHPLI), 51 to 71 (AVISTLCIALGSGAAGAINMW), 93 to 115 (ISRSSALEVGLVLSFISVTIMMI), 119 to 136 (YISGILLAISIGFYIYVY), 148 to 168 (IVIGGAAGALPPIIGWTSVTG), 175 to 195 (LVLFLIIFMWTPPHFWALSLL), 219 to 239 (IHILVYSILLFPITLLPGLFL), 244 to 264 (LYEITAIPLGLMFVVQAFQVF), and 275 to 295 (MFTYSIIYLFILFTCIMLSSF).

It belongs to the UbiA prenyltransferase family. Protoheme IX farnesyltransferase subfamily.

The protein resides in the cell inner membrane. It catalyses the reaction heme b + (2E,6E)-farnesyl diphosphate + H2O = Fe(II)-heme o + diphosphate. Its pathway is porphyrin-containing compound metabolism; heme O biosynthesis; heme O from protoheme: step 1/1. Functionally, converts heme B (protoheme IX) to heme O by substitution of the vinyl group on carbon 2 of heme B porphyrin ring with a hydroxyethyl farnesyl side group. The polypeptide is Protoheme IX farnesyltransferase (Ehrlichia ruminantium (strain Gardel)).